Consider the following 149-residue polypeptide: Large ribosomal subunit protein bL20m (149 aa).

A mitochondrion-targeting transit peptide spans Met1 to Trp9.

This sequence belongs to the bacterial ribosomal protein bL20 family. In terms of assembly, component of the mitochondrial large ribosomal subunit (mt-LSU). Mature mammalian 55S mitochondrial ribosomes consist of a small (28S) and a large (39S) subunit. The 28S small subunit contains a 12S ribosomal RNA (12S mt-rRNA) and 30 different proteins. The 39S large subunit contains a 16S rRNA (16S mt-rRNA), a copy of mitochondrial valine transfer RNA (mt-tRNA(Val)), which plays an integral structural role, and 52 different proteins. Interacts with OXA1L.

It localises to the mitochondrion. In Homo sapiens (Human), this protein is Large ribosomal subunit protein bL20m (MRPL20).